The following is a 310-amino-acid chain: Probable deoxyhypusine synthase (310 aa).

Lys-280 serves as the catalytic Nucleophile.

It belongs to the deoxyhypusine synthase family. The cofactor is NAD(+).

The catalysed reaction is [eIF5A protein]-L-lysine + spermidine = [eIF5A protein]-deoxyhypusine + propane-1,3-diamine. Its pathway is protein modification; eIF5A hypusination. Functionally, catalyzes the NAD-dependent oxidative cleavage of spermidine and the subsequent transfer of the butylamine moiety of spermidine to the epsilon-amino group of a specific lysine residue of the eIF-5A precursor protein to form the intermediate deoxyhypusine residue. This chain is Probable deoxyhypusine synthase (dys), found in Aeropyrum pernix (strain ATCC 700893 / DSM 11879 / JCM 9820 / NBRC 100138 / K1).